Consider the following 201-residue polypeptide: dTTP/UTP pyrophosphatase (201 aa).

D80 serves as the catalytic Proton acceptor.

Belongs to the Maf family. YhdE subfamily. A divalent metal cation is required as a cofactor.

Its subcellular location is the cytoplasm. It catalyses the reaction dTTP + H2O = dTMP + diphosphate + H(+). It carries out the reaction UTP + H2O = UMP + diphosphate + H(+). Nucleoside triphosphate pyrophosphatase that hydrolyzes dTTP and UTP. May have a dual role in cell division arrest and in preventing the incorporation of modified nucleotides into cellular nucleic acids. The polypeptide is dTTP/UTP pyrophosphatase (Novosphingobium aromaticivorans (strain ATCC 700278 / DSM 12444 / CCUG 56034 / CIP 105152 / NBRC 16084 / F199)).